The sequence spans 37 residues: Photosystem II reaction center protein Y (37 aa).

Residues 4-22 (AIVVFAPIIAAVAWVVFNI) form a helical membrane-spanning segment.

It belongs to the PsbY family. PSII is composed of 1 copy each of membrane proteins PsbA, PsbB, PsbC, PsbD, PsbE, PsbF, PsbH, PsbI, PsbJ, PsbK, PsbL, PsbM, PsbT, PsbX, PsbY, Psb30/Ycf12, peripheral proteins PsbO, CyanoQ (PsbQ), PsbU, PsbV and a large number of cofactors. It forms dimeric complexes.

The protein localises to the cellular thylakoid membrane. Its function is as follows. Loosely associated component of the core of photosystem II (PSII), it is not always seen in crystals. PSII is a light-driven water plastoquinone oxidoreductase, using light energy to abstract electrons from H(2)O, generating a proton gradient subsequently used for ATP formation. The protein is Photosystem II reaction center protein Y of Prochlorococcus marinus (strain MIT 9312).